A 386-amino-acid chain; its full sequence is 8-amino-7-oxononanoate synthase (386 aa).

Substrate-binding residues include Arg-22 and Arg-29. Residue 109–110 (GY) coordinates pyridoxal 5'-phosphate. Substrate is bound at residue His-134. Pyridoxal 5'-phosphate contacts are provided by residues Ser-182, 207 to 210 (DDAH), and 237 to 240 (TLSK). Lys-240 is modified (N6-(pyridoxal phosphate)lysine). Residue Thr-349 participates in substrate binding.

It belongs to the class-II pyridoxal-phosphate-dependent aminotransferase family. BioF subfamily. In terms of assembly, homodimer. Pyridoxal 5'-phosphate serves as cofactor.

It catalyses the reaction 6-carboxyhexanoyl-[ACP] + L-alanine + H(+) = (8S)-8-amino-7-oxononanoate + holo-[ACP] + CO2. It participates in cofactor biosynthesis; biotin biosynthesis. Catalyzes the decarboxylative condensation of pimeloyl-[acyl-carrier protein] and L-alanine to produce 8-amino-7-oxononanoate (AON), [acyl-carrier protein], and carbon dioxide. This Beijerinckia indica subsp. indica (strain ATCC 9039 / DSM 1715 / NCIMB 8712) protein is 8-amino-7-oxononanoate synthase.